The following is a 461-amino-acid chain: Eukaryotic translation initiation factor 3 subunit M (461 aa).

The segment at 42–61 (LLEPLRQQEQSDAEPDRKQR) is disordered. The PCI domain maps to 205–376 (DQELAQTHVV…SEFLVHRATY (172 aa)). Residues 422–461 (AAEEAAQGKSGDKKGDRRQRRDQPQQSQPAPEAATAVAAE) are disordered. Over residues 431–444 (SGDKKGDRRQRRDQ) the composition is skewed to basic and acidic residues. Residues 445 to 461 (PQQSQPAPEAATAVAAE) are compositionally biased toward low complexity.

It belongs to the eIF-3 subunit M family. As to quaternary structure, component of the eukaryotic translation initiation factor 3 (eIF-3) complex.

It localises to the cytoplasm. Component of the eukaryotic translation initiation factor 3 (eIF-3) complex, which is involved in protein synthesis of a specialized repertoire of mRNAs and, together with other initiation factors, stimulates binding of mRNA and methionyl-tRNAi to the 40S ribosome. The eIF-3 complex specifically targets and initiates translation of a subset of mRNAs involved in cell proliferation. This chain is Eukaryotic translation initiation factor 3 subunit M, found in Aspergillus terreus (strain NIH 2624 / FGSC A1156).